A 303-amino-acid chain; its full sequence is Porphobilinogen deaminase (303 aa).

The residue at position 241 (C241) is an S-(dipyrrolylmethanemethyl)cysteine.

It belongs to the HMBS family. As to quaternary structure, monomer. Dipyrromethane serves as cofactor.

The catalysed reaction is 4 porphobilinogen + H2O = hydroxymethylbilane + 4 NH4(+). The protein operates within porphyrin-containing compound metabolism; protoporphyrin-IX biosynthesis; coproporphyrinogen-III from 5-aminolevulinate: step 2/4. It participates in porphyrin-containing compound metabolism; chlorophyll biosynthesis. Functionally, tetrapolymerization of the monopyrrole PBG into the hydroxymethylbilane pre-uroporphyrinogen in several discrete steps. This Roseiflexus castenholzii (strain DSM 13941 / HLO8) protein is Porphobilinogen deaminase.